Consider the following 313-residue polypeptide: Ribosomal RNA small subunit methyltransferase H (313 aa).

S-adenosyl-L-methionine-binding positions include 35–37 (GGH), Asp-55, Phe-79, Asp-100, and Gln-107.

It belongs to the methyltransferase superfamily. RsmH family.

Its subcellular location is the cytoplasm. It carries out the reaction cytidine(1402) in 16S rRNA + S-adenosyl-L-methionine = N(4)-methylcytidine(1402) in 16S rRNA + S-adenosyl-L-homocysteine + H(+). Its function is as follows. Specifically methylates the N4 position of cytidine in position 1402 (C1402) of 16S rRNA. The chain is Ribosomal RNA small subunit methyltransferase H from Burkholderia pseudomallei (strain K96243).